We begin with the raw amino-acid sequence, 311 residues long: tRNA-cytidine(32) 2-sulfurtransferase (311 aa).

The PP-loop motif signature appears at 47–52 (SGGKDS). Residues Cys-122, Cys-125, and Cys-213 each contribute to the [4Fe-4S] cluster site.

This sequence belongs to the TtcA family. In terms of assembly, homodimer. It depends on Mg(2+) as a cofactor. Requires [4Fe-4S] cluster as cofactor.

It is found in the cytoplasm. It catalyses the reaction cytidine(32) in tRNA + S-sulfanyl-L-cysteinyl-[cysteine desulfurase] + AH2 + ATP = 2-thiocytidine(32) in tRNA + L-cysteinyl-[cysteine desulfurase] + A + AMP + diphosphate + H(+). It functions in the pathway tRNA modification. In terms of biological role, catalyzes the ATP-dependent 2-thiolation of cytidine in position 32 of tRNA, to form 2-thiocytidine (s(2)C32). The sulfur atoms are provided by the cysteine/cysteine desulfurase (IscS) system. The chain is tRNA-cytidine(32) 2-sulfurtransferase from Salmonella paratyphi A (strain ATCC 9150 / SARB42).